The primary structure comprises 345 residues: N-acetyl-gamma-glutamyl-phosphate reductase (345 aa).

The active site involves cysteine 149.

Belongs to the NAGSA dehydrogenase family. Type 1 subfamily.

Its subcellular location is the cytoplasm. The enzyme catalyses N-acetyl-L-glutamate 5-semialdehyde + phosphate + NADP(+) = N-acetyl-L-glutamyl 5-phosphate + NADPH + H(+). It participates in amino-acid biosynthesis; L-arginine biosynthesis; N(2)-acetyl-L-ornithine from L-glutamate: step 3/4. Functionally, catalyzes the NADPH-dependent reduction of N-acetyl-5-glutamyl phosphate to yield N-acetyl-L-glutamate 5-semialdehyde. The protein is N-acetyl-gamma-glutamyl-phosphate reductase of Halalkalibacterium halodurans (strain ATCC BAA-125 / DSM 18197 / FERM 7344 / JCM 9153 / C-125) (Bacillus halodurans).